Consider the following 87-residue polypeptide: Defensin-like protein 100 (87 aa).

A signal peptide spans 1 to 29 (MRSLRLRTVVVATIVVCLSVLLSPTEVDG). Cystine bridges form between cysteine 31–cysteine 79, cysteine 38–cysteine 64, cysteine 44–cysteine 76, and cysteine 48–cysteine 78.

The protein belongs to the DEFL family.

The protein resides in the secreted. The sequence is that of Defensin-like protein 100 from Arabidopsis thaliana (Mouse-ear cress).